A 163-amino-acid polypeptide reads, in one-letter code: 6,7-dimethyl-8-ribityllumazine synthase (163 aa).

Residues phenylalanine 27, 58 to 60 (ALE), and 87 to 89 (CVV) each bind 5-amino-6-(D-ribitylamino)uracil. (2S)-2-hydroxy-3-oxobutyl phosphate is bound at residue 92–93 (DT). Histidine 95 functions as the Proton donor in the catalytic mechanism. Asparagine 120 provides a ligand contact to 5-amino-6-(D-ribitylamino)uracil. Residue arginine 134 coordinates (2S)-2-hydroxy-3-oxobutyl phosphate.

The protein belongs to the DMRL synthase family.

It carries out the reaction (2S)-2-hydroxy-3-oxobutyl phosphate + 5-amino-6-(D-ribitylamino)uracil = 6,7-dimethyl-8-(1-D-ribityl)lumazine + phosphate + 2 H2O + H(+). The protein operates within cofactor biosynthesis; riboflavin biosynthesis; riboflavin from 2-hydroxy-3-oxobutyl phosphate and 5-amino-6-(D-ribitylamino)uracil: step 1/2. Functionally, catalyzes the formation of 6,7-dimethyl-8-ribityllumazine by condensation of 5-amino-6-(D-ribitylamino)uracil with 3,4-dihydroxy-2-butanone 4-phosphate. This is the penultimate step in the biosynthesis of riboflavin. In Nitrobacter hamburgensis (strain DSM 10229 / NCIMB 13809 / X14), this protein is 6,7-dimethyl-8-ribityllumazine synthase.